The following is a 397-amino-acid chain: METKEAIIHVIVATAEWGKDQLRYRRHRLAEFLAAQEETKEVIWVCPAPRAQGKEFQEVHSGIRQFAVKDLLQKKMFRFGRYTDVFYRHKLSPLLDELTPASANGERCCLWYTFPGFPLLSSLYSWDQVIYDCSDLWAAPISGRSNLLSEFRRKVIKSAELRIIQRADSITCSSDYLHKEVDKKLTAGREKVHTVENGVEYELFSANKQAPDRSILQGREGIVLGFIGGIKPKLDFKMIKEAALQKPDWTFLWVGPDATNGDVSFQELLRLPNVIWTGPADPKEVPHYMELIDIGIMPYKQSPYNQAVFPLKLFEFLAAGKPVVGTNLPSTSKMQKPYVYEYVEGDHPIDFIAACEKVLGQNGDETYKEMRRNIARTQDWNCLFRQIMKYTGIQKHA.

This sequence belongs to the glycosyltransferase group 1 family.

The protein operates within cell wall biogenesis; teichuronic acid biosynthesis. The chain is Putative teichuronic acid biosynthesis glycosyltransferase TuaH (tuaH) from Bacillus subtilis (strain 168).